The chain runs to 1274 residues: Meiosis inhibitor protein 1 (1274 aa).

Expressed predominantly in testis. Weakly expressed in spleen and thymus. Expressed in the ovaries, Fallopian tubes and uterus.

Functionally, required for normal meiotic chromosome synapsis. May be involved in the formation of meiotic double-strand breaks (DSBs) in spermatocytes. The chain is Meiosis inhibitor protein 1 from Homo sapiens (Human).